We begin with the raw amino-acid sequence, 578 residues long: MKVYCGYIGEEHLEKNVILNGWVKKVRKMGNLVFVDLKDRFGIVQIFATKSDGVFNELTQLSREDVINVEGLVLLRKNPNNDLKTGRFEIHVKKILIYSKAKTPPLIIEDETDANEEIRFRYRYLDLRRDVNLKIFELRSKVYQAFRNYLYSQDFIETETPILAKPTPEGARDFYVPTRTRKFYALPQSPQTFKQLLMVAGFQKYFQITKCFRDEDLRSDRQPEFTQVDIELSFADEIEIQTLIENLLKYVFKQTINVDLTTPFMRMSYEQAINDYGSDKPDLRFDLKIKTLNTYFENSKTLFFQKALLNNQSIRAILVPNINLNKKQVQTLEKFAKDKGAKGLSWISIKDEKIIDGSLLSIQEDHIIYKTIFKDFNLSTGSILLVADTFDIASQALGLVRINLASILNLKKPNIFKFVWIIDWPLYEYDNEAQRFVAAHHPFTMPTLETLNTFDVNKKDARGRSYDIVLNGYELGGGSVRIIDQQIQRRMFKSINMSDEEANLKFGFLLTAFEYGVPPHCGIALGLDRLMMILVNSEYIRDVVAFPKNNNGVDMMLDAPSNMNDEDLKELGLKIKND.

Glu-169 contacts L-aspartate. The segment at 191–194 (QTFK) is aspartate. Position 213 (Arg-213) interacts with L-aspartate. Residues 213-215 (RDE) and Gln-222 contribute to the ATP site. Position 440 (His-440) interacts with L-aspartate. Glu-474 provides a ligand contact to ATP. Arg-481 contributes to the L-aspartate binding site. ATP is bound at residue 526-529 (GLDR).

The protein belongs to the class-II aminoacyl-tRNA synthetase family. Type 1 subfamily. Homodimer.

The protein localises to the cytoplasm. The catalysed reaction is tRNA(Asp) + L-aspartate + ATP = L-aspartyl-tRNA(Asp) + AMP + diphosphate. Functionally, catalyzes the attachment of L-aspartate to tRNA(Asp) in a two-step reaction: L-aspartate is first activated by ATP to form Asp-AMP and then transferred to the acceptor end of tRNA(Asp). This is Aspartate--tRNA ligase from Ureaplasma parvum serovar 3 (strain ATCC 700970).